The primary structure comprises 256 residues: DNA repair protein RecO (256 aa).

It belongs to the RecO family.

Involved in DNA repair and RecF pathway recombination. The chain is DNA repair protein RecO from Desulforamulus reducens (strain ATCC BAA-1160 / DSM 100696 / MI-1) (Desulfotomaculum reducens).